We begin with the raw amino-acid sequence, 248 residues long: Glutathione S-transferase omega-2 (248 aa).

The GST N-terminal domain maps to 22-101 (GVIRIYSMRF…YLDDVFPGRK (80 aa)). Catalysis depends on C32, which acts as the Nucleophile. Residues K59, V72, and 85-86 (ES) each bind glutathione. Residues 106 to 231 (DPYERARQKM…IFLGFLNLYF (126 aa)) enclose the GST C-terminal domain.

It belongs to the GST superfamily. Omega family.

It catalyses the reaction RX + glutathione = an S-substituted glutathione + a halide anion + H(+). The catalysed reaction is L-dehydroascorbate + 2 glutathione = glutathione disulfide + L-ascorbate. It carries out the reaction methylarsonate + 2 glutathione + H(+) = methylarsonous acid + glutathione disulfide + H2O. Exhibits glutathione-dependent thiol transferase activity. Has high dehydroascorbate reductase activity and may contribute to the recycling of ascorbic acid. Participates in the biotransformation of inorganic arsenic and reduces monomethylarsonic acid (MMA). In Rattus norvegicus (Rat), this protein is Glutathione S-transferase omega-2 (Gsto2).